Here is a 142-residue protein sequence, read N- to C-terminus: Small ribosomal subunit protein uS12 (142 aa).

The disordered stretch occupies residues Met-1–Gln-44. Positions Leu-11–Leu-32 are enriched in basic and acidic residues.

It belongs to the universal ribosomal protein uS12 family. In terms of assembly, part of the 30S ribosomal subunit.

With S4 and S5 plays an important role in translational accuracy. Located at the interface of the 30S and 50S subunits. This chain is Small ribosomal subunit protein uS12, found in Haloquadratum walsbyi (strain DSM 16790 / HBSQ001).